The primary structure comprises 278 residues: Elongation factor Ts (278 aa).

The interval 80–83 (TDFV) is involved in Mg(2+) ion dislocation from EF-Tu.

This sequence belongs to the EF-Ts family.

The protein localises to the cytoplasm. Associates with the EF-Tu.GDP complex and induces the exchange of GDP to GTP. It remains bound to the aminoacyl-tRNA.EF-Tu.GTP complex up to the GTP hydrolysis stage on the ribosome. The protein is Elongation factor Ts of Arthrobacter sp. (strain FB24).